Reading from the N-terminus, the 319-residue chain is Ankyrin repeat domain-containing protein 1 (319 aa).

Residues 63–89 (EKQLEAELKKKKLEQRSKLENLEDLEI) are a coiled coil. ANK repeat units follow at residues 152-181 (YKRTALHRACLEGHLAIVEKLMEAGAQIEF), 185-214 (LESTAIHWACRGGNLEVLKLLLNKGAKISA), 218-247 (LLSTALHVAVRTGHYECAEHLIACEADLNA), 251-280 (EGDTPLHDAVRLNRYKMIRLLIMYGADLTI), and 284-315 (AGKTPMDLVLNWQNGTKAIFDSLKENSYKTSR).

As to quaternary structure, interacts with TTN/titin and YBX1.

It is found in the nucleus. May play an important role in endothelial cell activation. May act as a nuclear transcription factor that negatively regulates the expression of cardiac genes. The polypeptide is Ankyrin repeat domain-containing protein 1 (ANKRD1) (Oryctolagus cuniculus (Rabbit)).